The primary structure comprises 251 residues: 3-deoxy-manno-octulosonate cytidylyltransferase (251 aa).

Belongs to the KdsB family.

The protein resides in the cytoplasm. The catalysed reaction is 3-deoxy-alpha-D-manno-oct-2-ulosonate + CTP = CMP-3-deoxy-beta-D-manno-octulosonate + diphosphate. It functions in the pathway nucleotide-sugar biosynthesis; CMP-3-deoxy-D-manno-octulosonate biosynthesis; CMP-3-deoxy-D-manno-octulosonate from 3-deoxy-D-manno-octulosonate and CTP: step 1/1. The protein operates within bacterial outer membrane biogenesis; lipopolysaccharide biosynthesis. In terms of biological role, activates KDO (a required 8-carbon sugar) for incorporation into bacterial lipopolysaccharide in Gram-negative bacteria. In Chromobacterium violaceum (strain ATCC 12472 / DSM 30191 / JCM 1249 / CCUG 213 / NBRC 12614 / NCIMB 9131 / NCTC 9757 / MK), this protein is 3-deoxy-manno-octulosonate cytidylyltransferase.